The primary structure comprises 141 residues: Large ribosomal subunit protein uL16 (141 aa).

The interval 1 to 20 is disordered; sequence MLMPKRTKYRKQMKGRNRGK.

Belongs to the universal ribosomal protein uL16 family. In terms of assembly, part of the 50S ribosomal subunit.

Binds 23S rRNA and is also seen to make contacts with the A and possibly P site tRNAs. The sequence is that of Large ribosomal subunit protein uL16 from Helicobacter hepaticus (strain ATCC 51449 / 3B1).